Here is a 180-residue protein sequence, read N- to C-terminus: Large ribosomal subunit protein uL6 (180 aa).

Belongs to the universal ribosomal protein uL6 family. As to quaternary structure, part of the 50S ribosomal subunit.

This protein binds to the 23S rRNA, and is important in its secondary structure. It is located near the subunit interface in the base of the L7/L12 stalk, and near the tRNA binding site of the peptidyltransferase center. The chain is Large ribosomal subunit protein uL6 from Borreliella burgdorferi (strain ATCC 35210 / DSM 4680 / CIP 102532 / B31) (Borrelia burgdorferi).